A 1097-amino-acid polypeptide reads, in one-letter code: RecBCD enzyme subunit RecC (1097 aa).

This sequence belongs to the RecC family. As to quaternary structure, heterotrimer of RecB, RecC and RecD. All subunits contribute to DNA-binding.

Functionally, a helicase/nuclease that prepares dsDNA breaks (DSB) for recombinational DNA repair. Binds to DSBs and unwinds DNA via a highly rapid and processive ATP-dependent bidirectional helicase activity. Holoenzyme degrades any linearized DNA that is unable to undergo homologous recombination. In the holoenzyme this subunit recognizes the wild-type Chi sequence, and when added to isolated RecB increases its ATP-dependent helicase processivity. Unlike the case in E.coli, suppresses RecA-dependent homologous recombination, is instead required for single-strand annealing pathway repair of DSB. The chain is RecBCD enzyme subunit RecC from Mycobacterium tuberculosis (strain CDC 1551 / Oshkosh).